Consider the following 146-residue polypeptide: Small ribosomal subunit protein eS17 (146 aa).

It belongs to the eukaryotic ribosomal protein eS17 family. In terms of assembly, component of the small ribosomal subunit (SSU). Mature N.crassa ribosomes consist of a small (40S) and a large (60S) subunit. The 40S small subunit contains 1 molecule of ribosomal RNA (18S rRNA) and at least 32 different proteins. The large 60S subunit contains 3 rRNA molecules (26S, 5.8S and 5S rRNA) and at least 42 different proteins.

It localises to the cytoplasm. Component of the ribosome, a large ribonucleoprotein complex responsible for the synthesis of proteins in the cell. The small ribosomal subunit (SSU) binds messenger RNAs (mRNAs) and translates the encoded message by selecting cognate aminoacyl-transfer RNA (tRNA) molecules. The large subunit (LSU) contains the ribosomal catalytic site termed the peptidyl transferase center (PTC), which catalyzes the formation of peptide bonds, thereby polymerizing the amino acids delivered by tRNAs into a polypeptide chain. The nascent polypeptides leave the ribosome through a tunnel in the LSU and interact with protein factors that function in enzymatic processing, targeting, and the membrane insertion of nascent chains at the exit of the ribosomal tunnel. The chain is Small ribosomal subunit protein eS17 (rps-17) from Neurospora crassa (strain ATCC 24698 / 74-OR23-1A / CBS 708.71 / DSM 1257 / FGSC 987).